Consider the following 617-residue polypeptide: Chaperone protein HscA homolog (617 aa).

Belongs to the heat shock protein 70 family.

Functionally, probable chaperone. Has a low intrinsic ATPase activity which is markedly stimulated by HscB. This Vibrio vulnificus (strain CMCP6) protein is Chaperone protein HscA homolog.